The chain runs to 74 residues: ATP synthase subunit c (74 aa).

2 helical membrane-spanning segments follow: residues 9-29 and 51-71; these read IAIA…ASIF and LIGA…AILL.

This sequence belongs to the ATPase C chain family. As to quaternary structure, F-type ATPases have 2 components, F(1) - the catalytic core - and F(0) - the membrane proton channel. F(1) has five subunits: alpha(3), beta(3), gamma(1), delta(1), epsilon(1). F(0) has three main subunits: a(1), b(2) and c(10-14). The alpha and beta chains form an alternating ring which encloses part of the gamma chain. F(1) is attached to F(0) by a central stalk formed by the gamma and epsilon chains, while a peripheral stalk is formed by the delta and b chains.

It is found in the cell inner membrane. F(1)F(0) ATP synthase produces ATP from ADP in the presence of a proton or sodium gradient. F-type ATPases consist of two structural domains, F(1) containing the extramembraneous catalytic core and F(0) containing the membrane proton channel, linked together by a central stalk and a peripheral stalk. During catalysis, ATP synthesis in the catalytic domain of F(1) is coupled via a rotary mechanism of the central stalk subunits to proton translocation. Functionally, key component of the F(0) channel; it plays a direct role in translocation across the membrane. A homomeric c-ring of between 10-14 subunits forms the central stalk rotor element with the F(1) delta and epsilon subunits. The sequence is that of ATP synthase subunit c from Orientia tsutsugamushi (strain Ikeda) (Rickettsia tsutsugamushi).